The primary structure comprises 1184 residues: Cartilage intermediate layer protein 1 (1184 aa).

The first 21 residues, 1 to 21, serve as a signal peptide directing secretion; it reads MVGTKAWVFSFLVLEVTSVLG. Asn129 and Asn132 each carry an N-linked (GlcNAc...) asparagine glycan. The TSP type-1 domain occupies 149 to 201; sequence ERIWSPWSPWSKCSAACGQTGVQTRTRICLAEMVSLCSEASEEGQHCMGQDCT. Disulfide bonds link Cys161–Cys195, Cys165–Cys200, Cys177–Cys185, and Cys330–Cys376. The Ig-like C2-type domain occupies 309–395; it reads PYMVMNPETK…KSKVAQLIVI (87 aa). N-linked (GlcNAc...) asparagine glycosylation is found at Asn346, Asn420, Asn550, Asn631, Asn1000, and Asn1056. Residues 1136–1170 are disordered; it reads TPAQSPAAGTVQGRVPSRRQQRASRGGQRQGGVVA. Residues 1158–1170 are compositionally biased toward low complexity; sequence ASRGGQRQGGVVA.

In terms of assembly, monomer. Interacts with TGFB1. In terms of processing, cleaved into 2 chains possibly by a furin-like protease upon or preceding secretion. Specifically expressed in cartilage. Localizes in the intermediates layer of articular cartilage but neither in the superficial nor in the deepest regions. Specifically and highly expressed in intervertebral disk tissue. Expression increases with aging in hip articular cartilage. Overexpressed in articular hyaline cartilage from patients with calcium pyrophosphate dihydrate crystal deposition disease (CPPD). Expression in intervertebral disk tissue from individuals with lumbar disk disease increases as disk degeneration progresses.

The protein localises to the secreted. The protein resides in the extracellular space. Its subcellular location is the extracellular matrix. In terms of biological role, probably plays a role in cartilage scaffolding. May act by antagonizing TGF-beta1 (TGFB1) and IGF1 functions. Has the ability to suppress IGF1-induced proliferation and sulfated proteoglycan synthesis, and inhibits ligand-induced IGF1R autophosphorylation. May inhibit TGFB1-mediated induction of cartilage matrix genes via its interaction with TGFB1. Overexpression may lead to impair chondrocyte growth and matrix repair and indirectly promote inorganic pyrophosphate (PPi) supersaturation in aging and osteoarthritis cartilage. The polypeptide is Cartilage intermediate layer protein 1 (CILP) (Homo sapiens (Human)).